The primary structure comprises 192 residues: GTP-dependent dephospho-CoA kinase (192 aa).

Residues D49, V50, V51, D68, K70, and E127 each coordinate GTP.

Belongs to the GTP-dependent DPCK family.

It catalyses the reaction 3'-dephospho-CoA + GTP = GDP + CoA + H(+). It participates in cofactor biosynthesis; coenzyme A biosynthesis. Functionally, catalyzes the GTP-dependent phosphorylation of the 3'-hydroxyl group of dephosphocoenzyme A to form coenzyme A (CoA). The chain is GTP-dependent dephospho-CoA kinase from Halorubrum lacusprofundi (strain ATCC 49239 / DSM 5036 / JCM 8891 / ACAM 34).